The chain runs to 67 residues: ATP synthase F(0) complex subunit 8 (67 aa).

Residues 8-24 (TWLIMILSMILTLFITF) form a helical membrane-spanning segment. The residue at position 54 (lysine 54) is an N6-acetyllysine; alternate. The residue at position 54 (lysine 54) is an N6-succinyllysine; alternate. Lysine 57 carries the N6-acetyllysine modification.

It belongs to the ATPase protein 8 family. In terms of assembly, component of the ATP synthase complex composed at least of ATP5F1A/subunit alpha, ATP5F1B/subunit beta, ATP5MC1/subunit c (homooctomer), MT-ATP6/subunit a, MT-ATP8/subunit 8, ATP5ME/subunit e, ATP5MF/subunit f, ATP5MG/subunit g, ATP5MK/subunit k, ATP5MJ/subunit j, ATP5F1C/subunit gamma, ATP5F1D/subunit delta, ATP5F1E/subunit epsilon, ATP5PF/subunit F6, ATP5PB/subunit b, ATP5PD/subunit d, ATP5PO/subunit OSCP. ATP synthase complex consists of a soluble F(1) head domain (subunits alpha(3) and beta(3)) - the catalytic core - and a membrane F(0) domain - the membrane proton channel (subunits c, a, 8, e, f, g, k and j). These two domains are linked by a central stalk (subunits gamma, delta, and epsilon) rotating inside the F1 region and a stationary peripheral stalk (subunits F6, b, d, and OSCP). Interacts with PRICKLE3.

The protein resides in the mitochondrion membrane. Its function is as follows. Subunit 8, of the mitochondrial membrane ATP synthase complex (F(1)F(0) ATP synthase or Complex V) that produces ATP from ADP in the presence of a proton gradient across the membrane which is generated by electron transport complexes of the respiratory chain. ATP synthase complex consist of a soluble F(1) head domain - the catalytic core - and a membrane F(1) domain - the membrane proton channel. These two domains are linked by a central stalk rotating inside the F(1) region and a stationary peripheral stalk. During catalysis, ATP synthesis in the catalytic domain of F(1) is coupled via a rotary mechanism of the central stalk subunits to proton translocation. In vivo, can only synthesize ATP although its ATP hydrolase activity can be activated artificially in vitro. Part of the complex F(0) domain. The protein is ATP synthase F(0) complex subunit 8 of Phoca vitulina (Harbor seal).